We begin with the raw amino-acid sequence, 2365 residues long: Voltage-dependent T-type calcium channel subunit alpha-1H (2365 aa).

The interval 1–63 (MTEGTLAADE…PGTECGADLG (63 aa)) is disordered. At 1–100 (MTEGTLAADE…SWCLRLVSRR (100 aa)) the chain is on the cytoplasmic side. Over residues 16–36 (GASPSAPAAPVRASPASPGVP) the composition is skewed to low complexity. The I repeat unit spans residues 87–422 (TRPRSWCLRL…LCLVVIATQF (336 aa)). The helical transmembrane segment at 101–119 (WFEHISMLVIMLNCVTLGM) threads the bilayer. At 120–141 (FRPCEDVECRSERCSILEAFDD) the chain is on the extracellular side. A Zn(2+)-binding site is contributed by Asp140. Residues 142–160 (FIFAFFAVEMVIKMVALGL) form a helical membrane-spanning segment. Residues 161-169 (FGQKCYLGD) lie on the Cytoplasmic side of the membrane. Residues 170 to 184 (TWNRLDFFIVMAGMM) traverse the membrane as a helical segment. Topologically, residues 185–193 (EYSLDGHNV) are extracellular. Residues Asp189 and His191 each coordinate Zn(2+). The N-linked (GlcNAc...) asparagine glycan is linked to Asn192. The chain crosses the membrane as a helical span at residues 194 to 212 (SLSAIRTVRVLRPLRAINR). The Cytoplasmic portion of the chain corresponds to 213 to 232 (VPSMRILVTLLLDTLPMLGN). Residues 233 to 253 (VLLLCFFVFFIFGIVGVQLWA) traverse the membrane as a helical segment. At 254–394 (GLLRNRCFLD…YYVMDAHSFY (141 aa)) the chain is on the extracellular side. The N-linked (GlcNAc...) asparagine glycan is linked to Asn271. A helical membrane pass occupies residues 395-419 (NFIYFILLIIVGSFFMINLCLVVIA). Topologically, residues 420-790 (TQFSETKQRE…SKLRRIVDSK (371 aa)) are cytoplasmic. 3 disordered regions span residues 490–573 (VDPS…SESV), 618–656 (PSGA…SPSP), and 737–761 (GDCR…RWRP). The span at 500–532 (GPRRRPRRAGRRTASVHHLVYHHHHHHHHHYHF) shows a compositional bias: basic residues. A compositionally biased stretch (pro residues) spans 557–566 (PPSPPSPGHG). Over residues 621–631 (AVNSKGSTSSR) the composition is skewed to polar residues. The stretch at 776-1015 (WASFSSKLRR…LLVAILVEGF (240 aa)) is one II repeat. Residues 791-811 (YFNRGIMAAILVNTLSMGVEY) form a helical membrane-spanning segment. The Extracellular portion of the chain corresponds to 812 to 824 (HEQPDELTNALEI). A helical transmembrane segment spans residues 825-846 (SNIVFTSMFALEMLLKLLACGP). At 847-852 (LGYIRN) the chain is on the cytoplasmic side. The chain crosses the membrane as a helical span at residues 853-871 (PYNIFDGIVVIISVWEIVG). Residues 872–879 (QADGGLSV) are Extracellular-facing. Residues 880 to 903 (LRTFRLLRVLKLVRFLPALRRQLV) traverse the membrane as a helical segment. Topologically, residues 904 to 914 (VLMRTMDNVAT) are cytoplasmic. The helical transmembrane segment at 915–935 (FCMLLMLFIFIFSILGMHLFG) threads the bilayer. The Extracellular portion of the chain corresponds to 936–987 (CKFSLKTDSGDTVPDRKNFDSLLWAIVTVFQILTQEDWNVVLYNGMASTSSW). A helical transmembrane segment spans residues 988–1012 (AALYFVALMTFGNYVLFNLLVAILV). The Cytoplasmic portion of the chain corresponds to 1013–1301 (EGFQAEGDAT…NRLRVSCQKV (289 aa)). The interval 1059–1215 (PNGHLEGRGS…HRSTMDLCPP (157 aa)) is disordered. Positions 1130–1147 (GPNSAGSSRRSSWNSLGR) are enriched in low complexity. A compositionally biased stretch (basic and acidic residues) spans 1199–1209 (RRAESLGHRST). One copy of the III repeat lies at 1292 to 1569 (NRLRVSCQKV…MFVGVVVENF (278 aa)). The helical transmembrane segment at 1302 to 1324 (IAHKMFDHVVLVFIFLNCITIAL) threads the bilayer. The Extracellular segment spans residues 1325 to 1342 (ERPDIDPGSTERAFLSVS). Residues 1343–1363 (NYIFTAIFVVEMMVKVVALGL) form a helical membrane-spanning segment. Topologically, residues 1364 to 1373 (LWGEHAYLQS) are cytoplasmic. Residues 1374-1393 (SWNVLDGLLVLVSLVDIIVA) form a helical membrane-spanning segment. Residues 1394–1407 (VASAGGAKILGVLR) lie on the Extracellular side of the membrane. Residues 1408–1429 (VLRLLRTLRPLRVISRAPGLKL) traverse the membrane as a helical segment. Residues 1430–1439 (VVETLISSLR) are Cytoplasmic-facing. A helical transmembrane segment spans residues 1440–1463 (PIGNIVLICCAFFIIFGILGVQLF). Topologically, residues 1464 to 1540 (KGKFYYCEGT…DQQPVQNHNP (77 aa)) are extracellular. A glycan (N-linked (GlcNAc...) asparagine) is linked at Asn1477. A helical membrane pass occupies residues 1541-1566 (WMLLYFISFLLIVSFFVLNMFVGVVV). Over 1567 to 1627 (ENFHKCRQHQ…RRSIHSLCTS (61 aa)) the chain is Cytoplasmic. Residues 1613–1874 (DYSHTRRSIH…VVVAVLMKHL (262 aa)) form an IV repeat. A helical transmembrane segment spans residues 1628–1648 (HYLDLFITFIICLNVITMSME). Residues 1649–1662 (HYNQPKSLDEALKY) lie on the Extracellular side of the membrane. The helical transmembrane segment at 1663-1684 (CNYVFTIVFVFEAALKLVAFGF) threads the bilayer. At 1685 to 1691 (RRFFKDR) the chain is on the cytoplasmic side. A helical membrane pass occupies residues 1692-1710 (WNQLDLAIVLLSIMGIALE). Residues 1711–1724 (EIEMNAALPINPTI) are Extracellular-facing. A helical membrane pass occupies residues 1725 to 1748 (IRIMRVLRIARVLKLLKMATGMRA). Residues 1749–1762 (LLDTVVQALPQVGN) lie on the Cytoplasmic side of the membrane. Residues 1763–1783 (LGLLFMLLFFIYAALGVELFG) form a helical membrane-spanning segment. The Extracellular portion of the chain corresponds to 1784–1846 (RLECSEDNPC…KHCLSYLPAL (63 aa)). The helical transmembrane segment at 1847-1874 (SPVYFVTFVLVAQFVLVNVVVAVLMKHL) threads the bilayer. Residues 1875–2365 (EESNKEARED…APDDSGDEPV (491 aa)) lie on the Cytoplasmic side of the membrane. Composition is skewed to polar residues over residues 1897 to 1916 (QGST…TEPD) and 1967 to 1983 (VTSA…SFQV). Disordered stretches follow at residues 1897-1920 (QGST…TPNL), 1967-1999 (VTSA…PLCA), 2053-2264 (APLG…GERW), and 2321-2365 (ELSM…DEPV). Residues 2092–2102 (DDAEAADPADE) show a composition bias toward acidic residues. Residues 2172–2187 (GDGHLESGEVRARASE) show a composition bias toward basic and acidic residues.

The protein belongs to the calcium channel alpha-1 subunit (TC 1.A.1.11) family. CACNA1H subfamily. As to quaternary structure, interacts (via N-terminal cytoplasmic domain) with STAC. In response to raising of intracellular calcium, the T-type channels are activated by CaM-kinase II. In terms of tissue distribution, is highly expressed in lumbosacral and thoracolumbar dorsal root ganglion neurons.

It is found in the cell membrane. It catalyses the reaction Ca(2+)(in) = Ca(2+)(out). Its function is as follows. Voltage-sensitive calcium channel that gives rise to T-type calcium currents. T-type calcium channels belong to the 'low-voltage activated (LVA)' group. A particularity of this type of channel is an opening at quite negative potentials, and a voltage-dependent inactivation. T-type channels serve pacemaking functions in both central neurons and cardiac nodal cells and support calcium signaling in secretory cells and vascular smooth muscle. They may also be involved in the modulation of firing patterns of neurons. In the adrenal zona glomerulosa, participates in the signaling pathway leading to aldosterone production in response to either AGT/angiotensin II, or hyperkalemia. The polypeptide is Voltage-dependent T-type calcium channel subunit alpha-1H (Cacna1h) (Mus musculus (Mouse)).